The sequence spans 293 residues: Group 3 late-embryogenesis abundant protein, mitochondrial (293 aa).

Residues 1 to 31 (MFLARNAGRAGYRGVVAYQQAASFSVSSAKA) constitute a mitochondrion transit peptide. Residues 27 to 43 (SSAKAAGSRSSGGSDAG) show a composition bias toward low complexity. The disordered stretch occupies residues 27–52 (SSAKAAGSRSSGGSDAGDYAREAAEH). LEA 11-mer repeat repeat units follow at residues 58 to 68 (KDLKNEASWKA), 83 to 93 (KDTVKEGVHDM), 123 to 133 (KNAAQDTAATL), 134 to 144 (KDKAGSAWNQA), 145 to 155 (KHVVEDKGEDV), 160 to 170 (KDTASKVWGKA), 171 to 181 (KHVAEDVKENA), 199 to 209 (KDKAADVLSGA), and 210 to 220 (KHTAENLAHKA). The interval 217-293 (AHKAQAAIHD…KGPGQAGGRR (77 aa)) is disordered. The span at 230–265 (SSGSQSQSQSQSQYRQGQQQGRQDQQQSKSQWGQTS) shows a compositional bias: low complexity. Gly residues predominate over residues 279–293 (GPQGGKGPGQAGGRR).

It belongs to the LEA type 4 family.

It localises to the mitochondrion. In terms of biological role, mitochondrial heat soluble protein acting as a molecular shield in water-deficient condition. The protein is Group 3 late-embryogenesis abundant protein, mitochondrial of Ramazzottius varieornatus (Water bear).